A 717-amino-acid polypeptide reads, in one-letter code: Glycine--tRNA ligase beta subunit (717 aa).

It belongs to the class-II aminoacyl-tRNA synthetase family. Tetramer of two alpha and two beta subunits.

The protein localises to the cytoplasm. The enzyme catalyses tRNA(Gly) + glycine + ATP = glycyl-tRNA(Gly) + AMP + diphosphate. The sequence is that of Glycine--tRNA ligase beta subunit from Gloeothece citriformis (strain PCC 7424) (Cyanothece sp. (strain PCC 7424)).